The sequence spans 286 residues: uncharacterized protein (286 aa).

The 146-residue stretch at 1–146 (MSRYKKDNDG…KPVDVERGDF (146 aa)) folds into the Integrase catalytic domain. Basic residues predominate over residues 252–263 (RKVKAKKGKKDK). The disordered stretch occupies residues 252-286 (RKVKAKKGKKDKKLKESKKSDDTSTGASTGSSIAM). Over residues 264–273 (KLKESKKSDD) the composition is skewed to basic and acidic residues. Positions 274–286 (TSTGASTGSSIAM) are enriched in low complexity.

This is an uncharacterized protein from Caenorhabditis elegans.